Reading from the N-terminus, the 407-residue chain is Multifunctional CCA protein (407 aa).

Residues glycine 8 and arginine 11 each contribute to the ATP site. The CTP site is built by glycine 8 and arginine 11. Mg(2+) contacts are provided by aspartate 21 and aspartate 23. Positions 91, 137, and 140 each coordinate ATP. Residues arginine 91, arginine 137, and arginine 140 each coordinate CTP. One can recognise an HD domain in the interval threonine 228–tryptophan 329.

This sequence belongs to the tRNA nucleotidyltransferase/poly(A) polymerase family. Bacterial CCA-adding enzyme type 1 subfamily. In terms of assembly, monomer. Can also form homodimers and oligomers. Mg(2+) serves as cofactor. It depends on Ni(2+) as a cofactor.

It carries out the reaction a tRNA precursor + 2 CTP + ATP = a tRNA with a 3' CCA end + 3 diphosphate. It catalyses the reaction a tRNA with a 3' CCA end + 2 CTP + ATP = a tRNA with a 3' CCACCA end + 3 diphosphate. In terms of biological role, catalyzes the addition and repair of the essential 3'-terminal CCA sequence in tRNAs without using a nucleic acid template. Adds these three nucleotides in the order of C, C, and A to the tRNA nucleotide-73, using CTP and ATP as substrates and producing inorganic pyrophosphate. tRNA 3'-terminal CCA addition is required both for tRNA processing and repair. Also involved in tRNA surveillance by mediating tandem CCA addition to generate a CCACCA at the 3' terminus of unstable tRNAs. While stable tRNAs receive only 3'-terminal CCA, unstable tRNAs are marked with CCACCA and rapidly degraded. This Vibrio vulnificus (strain CMCP6) protein is Multifunctional CCA protein.